Reading from the N-terminus, the 430-residue chain is Ribosomal protein uS12 methylthiotransferase RimO (430 aa).

The MTTase N-terminal domain maps to 2–119; the sequence is ISVYSISLGC…WPAMLAHALK (118 aa). Residues Cys11, Cys46, Cys81, Cys145, Cys149, and Cys152 each contribute to the [4Fe-4S] cluster site. Residues 131–361 form the Radical SAM core domain; it reads STGPSYAWLK…MEVQAEISEE (231 aa). The region spanning 364-430 is the TRAM domain; it reads AVHEGTRQQV…TRTYDLVALA (67 aa).

This sequence belongs to the methylthiotransferase family. RimO subfamily. [4Fe-4S] cluster serves as cofactor.

It is found in the cytoplasm. It carries out the reaction L-aspartate(89)-[ribosomal protein uS12]-hydrogen + (sulfur carrier)-SH + AH2 + 2 S-adenosyl-L-methionine = 3-methylsulfanyl-L-aspartate(89)-[ribosomal protein uS12]-hydrogen + (sulfur carrier)-H + 5'-deoxyadenosine + L-methionine + A + S-adenosyl-L-homocysteine + 2 H(+). Functionally, catalyzes the methylthiolation of an aspartic acid residue of ribosomal protein uS12. The protein is Ribosomal protein uS12 methylthiotransferase RimO of Nitratidesulfovibrio vulgaris (strain ATCC 29579 / DSM 644 / CCUG 34227 / NCIMB 8303 / VKM B-1760 / Hildenborough) (Desulfovibrio vulgaris).